The chain runs to 217 residues: Probable GTP-binding protein EngB (217 aa).

Residues 29-213 (GPPEVAFAGR…RQAIAETVGI (185 aa)) form the EngB-type G domain. GTP is bound by residues 37-44 (GRSNVGKS), 64-68 (GRTQE), 91-94 (DMPG), 158-161 (TKTD), and 192-194 (TSS). Positions 44 and 66 each coordinate Mg(2+).

The protein belongs to the TRAFAC class TrmE-Era-EngA-EngB-Septin-like GTPase superfamily. EngB GTPase family. Mg(2+) serves as cofactor.

In terms of biological role, necessary for normal cell division and for the maintenance of normal septation. In Rhizobium etli (strain ATCC 51251 / DSM 11541 / JCM 21823 / NBRC 15573 / CFN 42), this protein is Probable GTP-binding protein EngB.